We begin with the raw amino-acid sequence, 174 residues long: Transcription antitermination protein NusB (174 aa).

Belongs to the NusB family.

Its function is as follows. Involved in transcription antitermination. Required for transcription of ribosomal RNA (rRNA) genes. Binds specifically to the boxA antiterminator sequence of the ribosomal RNA (rrn) operons. The protein is Transcription antitermination protein NusB of Rhodopseudomonas palustris (strain ATCC BAA-98 / CGA009).